Reading from the N-terminus, the 328-residue chain is Beta-ketoacyl-[acyl-carrier-protein] synthase III (328 aa).

Catalysis depends on residues C122 and H255. The segment at 256-260 is ACP-binding; it reads QANVR. N285 is an active-site residue.

The protein belongs to the thiolase-like superfamily. FabH family. As to quaternary structure, homodimer.

It localises to the cytoplasm. It catalyses the reaction malonyl-[ACP] + acetyl-CoA + H(+) = 3-oxobutanoyl-[ACP] + CO2 + CoA. It functions in the pathway lipid metabolism; fatty acid biosynthesis. Its function is as follows. Catalyzes the condensation reaction of fatty acid synthesis by the addition to an acyl acceptor of two carbons from malonyl-ACP. Catalyzes the first condensation reaction which initiates fatty acid synthesis and may therefore play a role in governing the total rate of fatty acid production. Possesses both acetoacetyl-ACP synthase and acetyl transacylase activities. Its substrate specificity determines the biosynthesis of branched-chain and/or straight-chain of fatty acids. This is Beta-ketoacyl-[acyl-carrier-protein] synthase III from Bordetella petrii (strain ATCC BAA-461 / DSM 12804 / CCUG 43448).